The chain runs to 807 residues: Glycerol-3-phosphate acyltransferase (807 aa).

The HXXXXD motif motif lies at Cys308 to Met313.

The protein belongs to the GPAT/DAPAT family.

Its subcellular location is the cell inner membrane. It carries out the reaction sn-glycerol 3-phosphate + an acyl-CoA = a 1-acyl-sn-glycero-3-phosphate + CoA. Its pathway is phospholipid metabolism; CDP-diacylglycerol biosynthesis; CDP-diacylglycerol from sn-glycerol 3-phosphate: step 1/3. The polypeptide is Glycerol-3-phosphate acyltransferase (Shewanella baltica (strain OS155 / ATCC BAA-1091)).